Here is a 246-residue protein sequence, read N- to C-terminus: Ubiquinone biosynthesis O-methyltransferase (246 aa).

S-adenosyl-L-methionine-binding residues include arginine 40, glycine 70, aspartate 91, and methionine 135.

The protein belongs to the methyltransferase superfamily. UbiG/COQ3 family.

The catalysed reaction is a 3-demethylubiquinol + S-adenosyl-L-methionine = a ubiquinol + S-adenosyl-L-homocysteine + H(+). It carries out the reaction a 3-(all-trans-polyprenyl)benzene-1,2-diol + S-adenosyl-L-methionine = a 2-methoxy-6-(all-trans-polyprenyl)phenol + S-adenosyl-L-homocysteine + H(+). It participates in cofactor biosynthesis; ubiquinone biosynthesis. O-methyltransferase that catalyzes the 2 O-methylation steps in the ubiquinone biosynthetic pathway. The polypeptide is Ubiquinone biosynthesis O-methyltransferase (Colwellia psychrerythraea (strain 34H / ATCC BAA-681) (Vibrio psychroerythus)).